Reading from the N-terminus, the 749-residue chain is Small G protein signaling modulator 3 (749 aa).

The Rab-GAP TBC domain occupies 113-304; that stretch reads GIPHGMRPQL…RIWDLFFYEG (192 aa). A Phosphoserine modification is found at Ser405. Positions 414–438 form a coiled coil; the sequence is EDDLEALKAKNIKQTELVADLREAI. One can recognise an SH3 domain in the interval 479–538; that stretch reads SHRRRAKALLDFERHDDDELGFRKNDIITIISQKDEHCWVGELNGLRGWFPAKFVEVLDE. An RUN domain is found at 554 to 717; that stretch reads GVTDLVRGTL…FAFSLSQDWE (164 aa).

The protein belongs to the small G protein signaling modulator family. In terms of assembly, interacts with GJA1. Interaction with GJA1 induces its degradation. Interacts (via RUN domain) with NF2 (via C-terminus). Interacts with RAB3A, RAB4A, RAB5A, RAB8A, RAB11A, RAP1A, RAP1B, RAP2A, RAP2B and PDCD6I. No interaction with RAB27A. No interaction with GJB1 or GJD2. As to expression, expressed in brain, liver, kidney and testis. Moderately expressed in heart, very weakly in lung and muscle. Not expressed in spleen.

It is found in the cytoplasm. Functionally, may play a cooperative role in NF2-mediated growth suppression of cells. May act as a modulator of small G protein RAB- and RAP-mediated neuronal signal transduction and vesicular transportation pathways. The sequence is that of Small G protein signaling modulator 3 from Rattus norvegicus (Rat).